Reading from the N-terminus, the 1071-residue chain is DNA-directed RNA polymerase subunit beta (1071 aa).

This sequence belongs to the RNA polymerase beta chain family. In plastids the minimal PEP RNA polymerase catalytic core is composed of four subunits: alpha, beta, beta', and beta''. When a (nuclear-encoded) sigma factor is associated with the core the holoenzyme is formed, which can initiate transcription.

It localises to the plastid. The protein localises to the chloroplast. It carries out the reaction RNA(n) + a ribonucleoside 5'-triphosphate = RNA(n+1) + diphosphate. Its function is as follows. DNA-dependent RNA polymerase catalyzes the transcription of DNA into RNA using the four ribonucleoside triphosphates as substrates. This is DNA-directed RNA polymerase subunit beta from Anthoceros angustus (Hornwort).